The sequence spans 484 residues: NADH-quinone oxidoreductase subunit N (484 aa).

Helical transmembrane passes span 11-31 (SLWI…VLLI), 42-62 (VTYY…FNLI), 79-98 (MASV…MVYS), 113-133 (FVLV…YSLL), 134-154 (TLYL…AIAR), 167-187 (FVLG…IYGI), 211-231 (LIIN…LGAV), 248-268 (VTLF…VRIL), 279-299 (WSDL…VVAL), 313-333 (ISHV…GYGA), 335-355 (AFYM…IILL), 378-398 (FALM…LVGF), 408-428 (VVSA…VISA), and 457-477 (LVLS…DFWM).

It belongs to the complex I subunit 2 family. As to quaternary structure, NDH-1 is composed of 14 different subunits. Subunits NuoA, H, J, K, L, M, N constitute the membrane sector of the complex.

It is found in the cell inner membrane. The catalysed reaction is a quinone + NADH + 5 H(+)(in) = a quinol + NAD(+) + 4 H(+)(out). Its function is as follows. NDH-1 shuttles electrons from NADH, via FMN and iron-sulfur (Fe-S) centers, to quinones in the respiratory chain. The immediate electron acceptor for the enzyme in this species is believed to be ubiquinone. Couples the redox reaction to proton translocation (for every two electrons transferred, four hydrogen ions are translocated across the cytoplasmic membrane), and thus conserves the redox energy in a proton gradient. This Ruthia magnifica subsp. Calyptogena magnifica protein is NADH-quinone oxidoreductase subunit N.